A 603-amino-acid polypeptide reads, in one-letter code: UvrABC system protein C (603 aa).

Positions 17 to 94 constitute a GIY-YIG domain; that stretch reads TTSGCYKMLN…IKTHKPDYNV (78 aa).

This sequence belongs to the UvrC family. As to quaternary structure, interacts with UvrB in an incision complex.

The protein localises to the cytoplasm. The UvrABC repair system catalyzes the recognition and processing of DNA lesions. UvrC both incises the 5' and 3' sides of the lesion. The N-terminal half is responsible for the 3' incision and the C-terminal half is responsible for the 5' incision. The sequence is that of UvrABC system protein C from Borreliella burgdorferi (strain ATCC 35210 / DSM 4680 / CIP 102532 / B31) (Borrelia burgdorferi).